A 157-amino-acid polypeptide reads, in one-letter code: Crossover junction endodeoxyribonuclease RuvC (157 aa).

Catalysis depends on residues Asp7, Glu67, and Asp140. Residues Asp7, Glu67, and Asp140 each contribute to the Mg(2+) site.

Belongs to the RuvC family. As to quaternary structure, homodimer which binds Holliday junction (HJ) DNA. The HJ becomes 2-fold symmetrical on binding to RuvC with unstacked arms; it has a different conformation from HJ DNA in complex with RuvA. In the full resolvosome a probable DNA-RuvA(4)-RuvB(12)-RuvC(2) complex forms which resolves the HJ. The cofactor is Mg(2+).

The protein localises to the cytoplasm. The enzyme catalyses Endonucleolytic cleavage at a junction such as a reciprocal single-stranded crossover between two homologous DNA duplexes (Holliday junction).. Its function is as follows. The RuvA-RuvB-RuvC complex processes Holliday junction (HJ) DNA during genetic recombination and DNA repair. Endonuclease that resolves HJ intermediates. Cleaves cruciform DNA by making single-stranded nicks across the HJ at symmetrical positions within the homologous arms, yielding a 5'-phosphate and a 3'-hydroxyl group; requires a central core of homology in the junction. The consensus cleavage sequence is 5'-(A/T)TT(C/G)-3'. Cleavage occurs on the 3'-side of the TT dinucleotide at the point of strand exchange. HJ branch migration catalyzed by RuvA-RuvB allows RuvC to scan DNA until it finds its consensus sequence, where it cleaves and resolves the cruciform DNA. This is Crossover junction endodeoxyribonuclease RuvC from Rickettsia massiliae (strain Mtu5).